The following is an 802-amino-acid chain: Vacuolar membrane protease (802 aa).

Residues 1 to 13 (MARYNPLAFTSGP) are Cytoplasmic-facing. A helical membrane pass occupies residues 14–34 (VVFFITITYTALLIALLLTHL). Over 35 to 357 (TLPSYPSHPP…KVFIVFQLHT (323 aa)) the chain is Vacuolar. Residues Asn-48, Asn-102, Asn-105, and Asn-112 are each glycosylated (N-linked (GlcNAc...) asparagine). Positions 152 and 164 each coordinate Zn(2+). Glu-198 acts as the Proton acceptor in catalysis. Zn(2+) is bound by residues Glu-199, Glu-224, and His-297. The chain crosses the membrane as a helical span at residues 358–378 (FFALCVTLLVVAPLTLIGLAW). Over 379 to 389 (SLHKADRNYLF) the chain is Cytoplasmic. A helical membrane pass occupies residues 390 to 409 (ARKAFVYSADDDEPIHLYGW). Residues 410 to 423 (RGFFRFPIAFGIAT) lie on the Vacuolar side of the membrane. Residues 424–444 (SIVVGLAMMLSAWFAVSWFLL) form a helical membrane-spanning segment. At 445 to 457 (HGADAMRPSALQR) the chain is on the cytoplasmic side. A helical transmembrane segment spans residues 458–478 (MYSLLWLFIGSFCLLVFFTIL). The Vacuolar segment spans residues 479–490 (ANNHQVAAGYPS). A helical membrane pass occupies residues 491 to 511 (LFCFATVFLANVLSFLELFLA). The Cytoplasmic portion of the chain corresponds to 512–609 (PPKSAYAWNV…EQEWSGKLPS (98 aa)). Disordered regions lie at residues 528–554 (GSRP…ATET) and 570–603 (AGRR…EQEW). A helical transmembrane segment spans residues 610–630 (WIWIVQFSLLAPMIVILVGQI). At 631–649 (ALLLTSALYQTPSDGNSPL) the chain is on the vacuolar side. A helical membrane pass occupies residues 650-670 (YIYTSIAALAVFLVAPIGPFI). At 671–677 (HRFTHHV) the chain is on the cytoplasmic side. The helical transmembrane segment at 678-698 (PTFLFLLCVATTIYNLVAFPF) threads the bilayer. At 699-802 (SEQHKLKVYF…HDDSNNRGRR (104 aa)) the chain is on the vacuolar side. Asn-746 and Asn-779 each carry an N-linked (GlcNAc...) asparagine glycan.

It belongs to the peptidase M28 family. The cofactor is Zn(2+).

Its subcellular location is the vacuole membrane. May be involved in vacuolar sorting and osmoregulation. In Leptosphaeria maculans (strain JN3 / isolate v23.1.3 / race Av1-4-5-6-7-8) (Blackleg fungus), this protein is Vacuolar membrane protease.